Here is a 241-residue protein sequence, read N- to C-terminus: Small ribosomal subunit protein uS3c (241 aa).

The protein belongs to the universal ribosomal protein uS3 family. As to quaternary structure, part of the 30S ribosomal subunit.

The protein localises to the plastid. This is Small ribosomal subunit protein uS3c (rps3) from Helicosporidium sp. subsp. Simulium jonesii (Green alga).